The following is an 812-amino-acid chain: Lon protease (812 aa).

A Lon N-terminal domain is found at 22–215 (YAVLPLRDIV…KALSFMEAEI (194 aa)). Residue 367–374 (GPPGVGKT) participates in ATP binding. The Lon proteolytic domain maps to 602-783 (EDQVGVVTGL…GEVLKHALVR (182 aa)). Catalysis depends on residues serine 689 and lysine 732. The interval 787 to 812 (PIEWTEQENPTAVPPVEDEAGASLAH) is disordered.

This sequence belongs to the peptidase S16 family. In terms of assembly, homohexamer. Organized in a ring with a central cavity.

The protein localises to the cytoplasm. It carries out the reaction Hydrolysis of proteins in presence of ATP.. In terms of biological role, ATP-dependent serine protease that mediates the selective degradation of mutant and abnormal proteins as well as certain short-lived regulatory proteins. Required for cellular homeostasis and for survival from DNA damage and developmental changes induced by stress. Degrades polypeptides processively to yield small peptide fragments that are 5 to 10 amino acids long. Binds to DNA in a double-stranded, site-specific manner. The protein is Lon protease of Brucella melitensis biotype 1 (strain ATCC 23456 / CCUG 17765 / NCTC 10094 / 16M).